Reading from the N-terminus, the 224-residue chain is MGRAVCLCSGGLDSTVAATIARRSGMDVYLIHVSYGQQAERREIEAIERIADAIGASDLMCSRIDLFRNISALTTQGARIPRGEEVSLDSESTPPTWVYCRNTVLLSMAAAYAEYLGAHSIYVGFNAEEAMSYPDNRPEFVEQFNALLEKAVASFSRPPKVVAPLVDMRKKDIVRLGADIKAPLELTWSCYLNGEIHCGTCESCQHRRRGFVEAGIPDPTEYQH.

Position 8–18 (8–18) interacts with ATP; sequence CSGGLDSTVAA. Zn(2+) is bound by residues Cys-190, Cys-198, Cys-201, and Cys-204.

Belongs to the QueC family. Zn(2+) is required as a cofactor.

The catalysed reaction is 7-carboxy-7-deazaguanine + NH4(+) + ATP = 7-cyano-7-deazaguanine + ADP + phosphate + H2O + H(+). The protein operates within purine metabolism; 7-cyano-7-deazaguanine biosynthesis. In terms of biological role, catalyzes the ATP-dependent conversion of 7-carboxy-7-deazaguanine (CDG) to 7-cyano-7-deazaguanine (preQ(0)). This is 7-cyano-7-deazaguanine synthase from Methanothrix thermoacetophila (strain DSM 6194 / JCM 14653 / NBRC 101360 / PT) (Methanosaeta thermophila).